Consider the following 108-residue polypeptide: MMDWKEAEELACKFLKKKGYKILERNYRTKYGEIDIVARDGREIVFVEVKSGSGKVDPLERIDLKKVRNLEQTARFYMIQNKLKGPARVDFVRVTPEGIDHFEGIWLG.

It belongs to the UPF0102 family.

This is UPF0102 protein Tpet_0671 from Thermotoga petrophila (strain ATCC BAA-488 / DSM 13995 / JCM 10881 / RKU-1).